The following is a 161-amino-acid chain: MAIITIDRVISHLLSKQTIAGLDLGTKTIGIAISDISLTFSNPRPVIQRKKFTLDALKLIKIFDHENVGVAIIGLPINMDGSNGPRVQATRTFVSNIAMYTKIPFIFWDERLSTIAAQRHLLEIDVSRIKRENRIDSAAAAFILQGALDRIQILRQNHTEG.

Belongs to the YqgF nuclease family.

Its subcellular location is the cytoplasm. Its function is as follows. Could be a nuclease involved in processing of the 5'-end of pre-16S rRNA. The sequence is that of Putative pre-16S rRNA nuclease from Bartonella bacilliformis (strain ATCC 35685 / KC583 / Herrer 020/F12,63).